We begin with the raw amino-acid sequence, 132 residues long: UPF0299 membrane protein YohJ (132 aa).

Helical transmembrane passes span 7–27, 31–51, 63–83, and 93–113; these read IIWQ…AGIF, LLPI…VLLA, GCYV…VGVM, and FGPV…VVSW.

The protein belongs to the UPF0299 family.

It is found in the cell inner membrane. In Salmonella arizonae (strain ATCC BAA-731 / CDC346-86 / RSK2980), this protein is UPF0299 membrane protein YohJ.